A 123-amino-acid chain; its full sequence is UPF0102 protein Pput_4400 (123 aa).

The protein belongs to the UPF0102 family.

The polypeptide is UPF0102 protein Pput_4400 (Pseudomonas putida (strain ATCC 700007 / DSM 6899 / JCM 31910 / BCRC 17059 / LMG 24140 / F1)).